The following is a 404-amino-acid chain: MSRCVITLNAGSSSIKFALFREGLTQEGSAKELTPMAIGLAEMVGEERRITVHDGAGAKIYEVKRTEHVDAPFHAEALRRILAWRQSAFPDAEVVAAGHRVVHGGVHYSAPVIVTDEVLKYLHTLIPLAPLHEPYNIAGILGAREAWPHVEQVACFDTAFHRTHPFVNDVFALPRRFYDEGVRRYGFHGLSYEYIVRRLREIAPLHAAGRVVVAHLGNGASMCAIRDGLSVASSMGFTALDGLPMGTRCGQLDPGVVLYLMQEKKMSAAEITDLLYRESGLKGLSGLSHDMRELEAADTLEAQQAIEYFVFRIRRELGGLAAVLKGIDAIVFCGGIGENSRHVRERVLEGMEWIGVELDRSANSANAEVISSERSRTRVFVIPTDEEGMIARHTLALLDQMAAA.

Residue Asn-9 coordinates Mg(2+). Position 16 (Lys-16) interacts with ATP. Arg-100 contributes to the substrate binding site. The active-site Proton donor/acceptor is the Asp-157. ATP contacts are provided by residues 215 to 219 (HLGNG), 290 to 292 (DMR), and 335 to 339 (GIGEN). Glu-386 is a binding site for Mg(2+).

The protein belongs to the acetokinase family. As to quaternary structure, homodimer. Mg(2+) serves as cofactor. Requires Mn(2+) as cofactor.

It localises to the cytoplasm. The enzyme catalyses acetate + ATP = acetyl phosphate + ADP. Its pathway is metabolic intermediate biosynthesis; acetyl-CoA biosynthesis; acetyl-CoA from acetate: step 1/2. Functionally, catalyzes the formation of acetyl phosphate from acetate and ATP. Can also catalyze the reverse reaction. The sequence is that of Acetate kinase from Methylocella silvestris (strain DSM 15510 / CIP 108128 / LMG 27833 / NCIMB 13906 / BL2).